The chain runs to 150 residues: Ribosome maturation factor RimP (150 aa).

It belongs to the RimP family.

Its subcellular location is the cytoplasm. In terms of biological role, required for maturation of 30S ribosomal subunits. The chain is Ribosome maturation factor RimP from Francisella philomiragia subsp. philomiragia (strain ATCC 25017 / CCUG 19701 / FSC 153 / O#319-036).